Reading from the N-terminus, the 196-residue chain is Pyridoxine/pyridoxamine 5'-phosphate oxidase (196 aa).

Residues 46 to 51 (RNVLYK), 61 to 62 (FT), R67, K68, and Q90 contribute to the FMN site. K51 contributes to the substrate binding site. Residues Y108, R112, and S116 each contribute to the substrate site. FMN is bound by residues 125 to 126 (QS) and W169. Substrate is bound at residue 175-177 (RLH). R179 lines the FMN pocket.

This sequence belongs to the pyridoxamine 5'-phosphate oxidase family. Homodimer. FMN serves as cofactor.

The enzyme catalyses pyridoxamine 5'-phosphate + O2 + H2O = pyridoxal 5'-phosphate + H2O2 + NH4(+). It catalyses the reaction pyridoxine 5'-phosphate + O2 = pyridoxal 5'-phosphate + H2O2. It functions in the pathway cofactor metabolism; pyridoxal 5'-phosphate salvage; pyridoxal 5'-phosphate from pyridoxamine 5'-phosphate: step 1/1. Its pathway is cofactor metabolism; pyridoxal 5'-phosphate salvage; pyridoxal 5'-phosphate from pyridoxine 5'-phosphate: step 1/1. Its function is as follows. Catalyzes the oxidation of either pyridoxine 5'-phosphate (PNP) or pyridoxamine 5'-phosphate (PMP) into pyridoxal 5'-phosphate (PLP). This Coxiella burnetii (strain RSA 493 / Nine Mile phase I) protein is Pyridoxine/pyridoxamine 5'-phosphate oxidase.